A 61-amino-acid chain; its full sequence is Delta-actitoxin-Avd2c (61 aa).

The first 20 residues, 1 to 20, serve as a signal peptide directing secretion; that stretch reads MMNRLLVFLMLGAFMLVVSA. Residues 21 to 31 constitute a propeptide that is removed on maturation; that stretch reads NDAYGGDESLG. Intrachain disulfides connect Cys-36–Cys-51, Cys-37–Cys-45, and Cys-39–Cys-56.

The protein belongs to the sea anemone short toxin (type III) family.

It is found in the secreted. Its subcellular location is the nematocyst. Its function is as follows. Sodium channel inhibitor. 5 uM completely inhibits voltage-gated sodium channel (Nav) inactivation. The protein is Delta-actitoxin-Avd2c of Anemonia viridis (Snakelocks anemone).